A 304-amino-acid polypeptide reads, in one-letter code: Dermonecrotic toxin LiSicTox-betaIA1ii (304 aa).

A signal peptide spans 1–21; it reads MLLCAVISFIVYAVFLQEANG. The propeptide occupies 22-26; it reads HAAER. Residue His38 is part of the active site. Mg(2+) contacts are provided by Glu58 and Asp60. His74 acts as the Nucleophile in catalysis. Intrachain disulfides connect Cys78-Cys84 and Cys80-Cys223. Position 118 (Asp118) interacts with Mg(2+).

It belongs to the arthropod phospholipase D family. Class II subfamily. The cofactor is Mg(2+). As to expression, expressed by the venom gland.

It localises to the secreted. It catalyses the reaction an N-(acyl)-sphingosylphosphocholine = an N-(acyl)-sphingosyl-1,3-cyclic phosphate + choline. It carries out the reaction an N-(acyl)-sphingosylphosphoethanolamine = an N-(acyl)-sphingosyl-1,3-cyclic phosphate + ethanolamine. The enzyme catalyses a 1-acyl-sn-glycero-3-phosphocholine = a 1-acyl-sn-glycero-2,3-cyclic phosphate + choline. The catalysed reaction is a 1-acyl-sn-glycero-3-phosphoethanolamine = a 1-acyl-sn-glycero-2,3-cyclic phosphate + ethanolamine. Functionally, dermonecrotic toxins cleave the phosphodiester linkage between the phosphate and headgroup of certain phospholipids (sphingolipid and lysolipid substrates), forming an alcohol (often choline) and a cyclic phosphate. This toxin acts on sphingomyelin (SM) with low activity. It may also act on ceramide phosphoethanolamine (CPE), lysophosphatidylcholine (LPC) and lysophosphatidylethanolamine (LPE), but not on lysophosphatidylserine (LPS), and lysophosphatidylglycerol (LPG). It acts by transphosphatidylation, releasing exclusively cyclic phosphate products as second products. Induces dermonecrosis, hemolysis, increased vascular permeability, edema, inflammatory response, and platelet aggregation. In Loxosceles intermedia (Brown spider), this protein is Dermonecrotic toxin LiSicTox-betaIA1ii.